We begin with the raw amino-acid sequence, 355 residues long: Ribosomal RNA small subunit methyltransferase H (355 aa).

S-adenosyl-L-methionine-binding positions include 47 to 49 (GGY), Asp65, Phe92, Asp113, and Gln120. Positions 332 to 355 (LLPLATLPETSHPKSASHSKSRRR) are disordered. Basic residues predominate over residues 346–355 (SASHSKSRRR).

This sequence belongs to the methyltransferase superfamily. RsmH family.

Its subcellular location is the cytoplasm. The enzyme catalyses cytidine(1402) in 16S rRNA + S-adenosyl-L-methionine = N(4)-methylcytidine(1402) in 16S rRNA + S-adenosyl-L-homocysteine + H(+). Its function is as follows. Specifically methylates the N4 position of cytidine in position 1402 (C1402) of 16S rRNA. This Beijerinckia indica subsp. indica (strain ATCC 9039 / DSM 1715 / NCIMB 8712) protein is Ribosomal RNA small subunit methyltransferase H.